The primary structure comprises 259 residues: Imidazole glycerol phosphate synthase subunit HisF (259 aa).

Catalysis depends on residues aspartate 11 and aspartate 130.

It belongs to the HisA/HisF family. In terms of assembly, heterodimer of HisH and HisF.

The protein resides in the cytoplasm. The catalysed reaction is 5-[(5-phospho-1-deoxy-D-ribulos-1-ylimino)methylamino]-1-(5-phospho-beta-D-ribosyl)imidazole-4-carboxamide + L-glutamine = D-erythro-1-(imidazol-4-yl)glycerol 3-phosphate + 5-amino-1-(5-phospho-beta-D-ribosyl)imidazole-4-carboxamide + L-glutamate + H(+). It participates in amino-acid biosynthesis; L-histidine biosynthesis; L-histidine from 5-phospho-alpha-D-ribose 1-diphosphate: step 5/9. Its function is as follows. IGPS catalyzes the conversion of PRFAR and glutamine to IGP, AICAR and glutamate. The HisF subunit catalyzes the cyclization activity that produces IGP and AICAR from PRFAR using the ammonia provided by the HisH subunit. This Chloroflexus aurantiacus (strain ATCC 29366 / DSM 635 / J-10-fl) protein is Imidazole glycerol phosphate synthase subunit HisF.